The following is a 317-amino-acid chain: Melanocyte-stimulating hormone receptor (317 aa).

The Extracellular segment spans residues 1 to 37; it reads MPVLGSQRRLLGSLNCTPPATFPLTLAPNRTGPQCLE. A glycan (N-linked (GlcNAc...) asparagine) is linked at Asn-29. A helical transmembrane segment spans residues 38–63; the sequence is VSIPDGLFLSLGLVSLVENVLVVAAI. At 64 to 72 the chain is on the cytoplasmic side; it reads AKNRNLHSP. The helical transmembrane segment at 73 to 93 threads the bilayer; sequence MYYFICCLAVSDLLVSVSNVL. The Extracellular segment spans residues 94 to 118; it reads ETAVMLLLEAGALAARAAVVQQLDN. Residues 119 to 140 form a helical membrane-spanning segment; the sequence is VIDMLICGSMVSSLCFLGAIAV. At 141 to 163 the chain is on the cytoplasmic side; the sequence is DRYISIFYALRYHSVVTLPRAWR. The chain crosses the membrane as a helical span at residues 164 to 183; the sequence is IIAAIWVASILTSLLFITYY. Residues 184–191 are Extracellular-facing; the sequence is NHTVVLLC. A helical membrane pass occupies residues 192-211; that stretch reads LVGFFIAMLALMAVLYVHML. The Cytoplasmic segment spans residues 212–240; that stretch reads ARACQHARGIARLQKRQRPIHQGFGLKGA. The helical transmembrane segment at 241 to 266 threads the bilayer; the sequence is ATLTILLGVFFLCWGPFFLHLSLIVL. The Extracellular segment spans residues 267-279; it reads CPQHPTCGCIFKN. A helical transmembrane segment spans residues 280-300; sequence FNLFLALIICNAIVDPLIYAF. The Cytoplasmic segment spans residues 301–317; the sequence is RSQELRKTLQEVLQCSW. Cys-315 carries S-palmitoyl cysteine lipidation.

It belongs to the G-protein coupled receptor 1 family. As to quaternary structure, interacts with MGRN1, but does not undergo MGRN1-mediated ubiquitination; this interaction competes with GNAS-binding and thus inhibits agonist-induced cAMP production. Interacts with OPN3; the interaction results in a decrease in MC1R-mediated cAMP signaling and ultimately a decrease in melanin production in melanocytes.

It localises to the cell membrane. In terms of biological role, receptor for MSH (alpha, beta and gamma) and ACTH. The activity of this receptor is mediated by G proteins which activate adenylate cyclase. Mediates melanogenesis, the production of eumelanin (black/brown) and phaeomelanin (red/yellow), via regulation of cAMP signaling in melanocytes. The polypeptide is Melanocyte-stimulating hormone receptor (MC1R) (Capreolus capreolus (European roe deer)).